The following is a 126-amino-acid chain: Small ribosomal subunit protein uS13 (126 aa).

The segment at 93 to 126 is disordered; the sequence is RRGLPVRGQRTKTNARTRKGPKRTVAGKKKAGRK.

It belongs to the universal ribosomal protein uS13 family. In terms of assembly, part of the 30S ribosomal subunit. Forms a loose heterodimer with protein S19. Forms two bridges to the 50S subunit in the 70S ribosome.

Located at the top of the head of the 30S subunit, it contacts several helices of the 16S rRNA. In the 70S ribosome it contacts the 23S rRNA (bridge B1a) and protein L5 of the 50S subunit (bridge B1b), connecting the 2 subunits; these bridges are implicated in subunit movement. Contacts the tRNAs in the A and P-sites. In Beutenbergia cavernae (strain ATCC BAA-8 / DSM 12333 / CCUG 43141 / JCM 11478 / NBRC 16432 / NCIMB 13614 / HKI 0122), this protein is Small ribosomal subunit protein uS13.